We begin with the raw amino-acid sequence, 323 residues long: Glucokinase (323 aa).

8–13 provides a ligand contact to ATP; sequence GDVGGT.

The protein belongs to the bacterial glucokinase family.

It localises to the cytoplasm. It carries out the reaction D-glucose + ATP = D-glucose 6-phosphate + ADP + H(+). This is Glucokinase from Yersinia pseudotuberculosis serotype I (strain IP32953).